A 271-amino-acid polypeptide reads, in one-letter code: Formamidopyrimidine-DNA glycosylase (271 aa).

Catalysis depends on P2, which acts as the Schiff-base intermediate with DNA. Catalysis depends on E3, which acts as the Proton donor. Catalysis depends on K58, which acts as the Proton donor; for beta-elimination activity. 3 residues coordinate DNA: H92, R111, and K152. Residues Y237–N271 form an FPG-type zinc finger. Residue R261 is the Proton donor; for delta-elimination activity of the active site.

This sequence belongs to the FPG family. As to quaternary structure, monomer. The cofactor is Zn(2+).

The catalysed reaction is Hydrolysis of DNA containing ring-opened 7-methylguanine residues, releasing 2,6-diamino-4-hydroxy-5-(N-methyl)formamidopyrimidine.. The enzyme catalyses 2'-deoxyribonucleotide-(2'-deoxyribose 5'-phosphate)-2'-deoxyribonucleotide-DNA = a 3'-end 2'-deoxyribonucleotide-(2,3-dehydro-2,3-deoxyribose 5'-phosphate)-DNA + a 5'-end 5'-phospho-2'-deoxyribonucleoside-DNA + H(+). Functionally, involved in base excision repair of DNA damaged by oxidation or by mutagenic agents. Acts as a DNA glycosylase that recognizes and removes damaged bases. Has a preference for oxidized purines, such as 7,8-dihydro-8-oxoguanine (8-oxoG). Has AP (apurinic/apyrimidinic) lyase activity and introduces nicks in the DNA strand. Cleaves the DNA backbone by beta-delta elimination to generate a single-strand break at the site of the removed base with both 3'- and 5'-phosphates. This chain is Formamidopyrimidine-DNA glycosylase, found in Wolbachia pipientis wMel.